The following is a 137-amino-acid chain: Envelope glycoprotein L (137 aa).

A signal peptide spans 1–25 (MRTVGVFLATCLVTIFVLPTWGNWA). An interaction with gH region spans residues 23 to 128 (NWAYPCCHVT…SVEDLFGANL (106 aa)). 2 disulfides stabilise this stretch: Cys28/Cys56 and Cys29/Cys79.

The protein belongs to the herpesviridae glycoprotein L family. As to quaternary structure, interacts with glycoprotein H (gH); this interaction is necessary for the correct processing and cell surface expression of gH. The heterodimer gH/gL seems to interact with gB trimers during fusion. The heterodimer gH/gL interacts with host EPHA2 to facilitate virus internalization and fusion.

It is found in the virion membrane. Its subcellular location is the host cell membrane. The protein localises to the host Golgi apparatus. The protein resides in the host trans-Golgi network. The heterodimer glycoprotein H-glycoprotein L is required for the fusion of viral and plasma membranes leading to virus entry into the host cell. Acts as a functional inhibitor of gH and maintains gH in an inhibited form. Upon binding to host integrins, gL dissociates from gH leading to activation of the viral fusion glycoproteins gB and gH. The heterodimer gH/gL targets also host EPHA2 to promote viral entry. In Epstein-Barr virus (strain AG876) (HHV-4), this protein is Envelope glycoprotein L.